The chain runs to 133 residues: Small ribosomal subunit protein bS6 (133 aa).

This sequence belongs to the bacterial ribosomal protein bS6 family.

Functionally, binds together with bS18 to 16S ribosomal RNA. This is Small ribosomal subunit protein bS6 from Borrelia turicatae (strain 91E135).